A 138-amino-acid polypeptide reads, in one-letter code: Transcription antitermination protein NusB (138 aa).

Belongs to the NusB family.

Functionally, involved in transcription antitermination. Required for transcription of ribosomal RNA (rRNA) genes. Binds specifically to the boxA antiterminator sequence of the ribosomal RNA (rrn) operons. The protein is Transcription antitermination protein NusB of Colwellia psychrerythraea (strain 34H / ATCC BAA-681) (Vibrio psychroerythus).